The primary structure comprises 129 residues: Follitropin subunit beta (129 aa).

The first 20 residues, 1 to 20 (MKSLQFCFLFCCWKAICCNS), serve as a signal peptide directing secretion. Intrachain disulfides connect Cys-21/Cys-69, Cys-35/Cys-84, Cys-38/Cys-122, Cys-46/Cys-100, Cys-50/Cys-102, and Cys-105/Cys-112. N-linked (GlcNAc...) asparagine glycans are attached at residues Asn-25 and Asn-42.

It belongs to the glycoprotein hormones subunit beta family. In terms of assembly, heterodimer. The active follitropin is a heterodimer composed of an alpha chain/CGA shared with other hormones and a unique beta chain/FSHB shown here.

It is found in the secreted. Together with the alpha chain CGA constitutes follitropin, the follicle-stimulating hormone, and provides its biological specificity to the hormone heterodimer. Binds FSHR, a G protein-coupled receptor, on target cells to activate downstream signaling pathways. Follitropin is involved in follicle development and spermatogenesis in reproductive organs. This chain is Follitropin subunit beta (FSHB), found in Sus scrofa (Pig).